A 77-amino-acid polypeptide reads, in one-letter code: uncharacterized protein (77 aa).

The HTH cro/C1-type domain maps to 11 to 65 (FARLRREKGLTQEEVEARSGFSQQYLSSLERGRRNPTVITLYELAQALGVSHVEL). Residues 22 to 41 (QEEVEARSGFSQQYLSSLER) constitute a DNA-binding region (H-T-H motif).

This is an uncharacterized protein from Sinorhizobium fredii (strain NBRC 101917 / NGR234).